Here is a 187-residue protein sequence, read N- to C-terminus: Alpha-D-galactose-binding lectin (187 aa).

Residues 1 to 37 (MTFAKQSCFNSIILLSIATSYFKIGHKISELGNRIEK) form the signal peptide. Position 39 is an N-acetylthreonine (threonine 39). N-acetyl-alpha-D-galactosamine contacts are provided by residues 53–56 (HPKG), aspartate 64, 72–76 (DIHER), histidine 101, glycine 104, glutamate 112, 120–122 (DRH), histidine 145, glycine 148, glutamate 156, and 164–166 (DKH).

In terms of assembly, homodimer. As to expression, highest expression in the posterior part of the mantle. Highly expressed in gills and to a lesser extent in mid mantle and anterior muscle. Lowest expression in digestive gland and posterior adductor muscle. Scarcely detectable in hemocytes.

With respect to regulation, agglutination of E.coli is inhibited by alpha-galactoside melibiose, but not by beta-galactoside lactose. Alpha-D-galactose-binding lectin. Binds D-GalNAc, but not glucose or its derivatives. Has hemagglutinating activity towards rabbit erythrocytes. Agglutinates bacteria. Has bacteriostatic activity on both Gram-positive and Gram-negative bacteria including B.subtilis, S.aureus, E.coli and V.parahaemolyticus, respectively. Has a dose-dependent cytotoxic effect on the human globotriaosylceramide (Gb3)-expressing Epstein-Barr virus (EBV)-positive Burkitt's lymphoma (Raji) cell line. Has dose-dependent cytotoxic effect on another Burkitt's lymphoma (Ramos) cell line, which does not possess the EBV genome, but also expresses Gb3. Binds to Gb3 in these cells leading to phosphorylation of MEK1/2, ERK1/2, JNK and p38 kinase, activation of caspase-9/3 and to expression of p21 and tumor necrosis factor (TNF)-alpha. No cytotoxic effect on the human chronic myelogenous leukemia (K-562) cell line, which does not express Gb3. May be involved in innate immunity acting as an antibacterial or antifungal agent. May be a pattern recognition receptor (PRR) involved in recognition of glycans found on parasitic or symbiotic microorganisms. The polypeptide is Alpha-D-galactose-binding lectin (Mytilus galloprovincialis (Mediterranean mussel)).